A 1122-amino-acid chain; its full sequence is Histone deacetylase 5 (1122 aa).

Residues methionine 1–arginine 22 form a disordered region. A Glycyl lysine isopeptide (Lys-Gly) (interchain with G-Cter in SUMO2) cross-link involves residue lysine 35. A disordered region spans residues lysine 196–leucine 281. The segment covering aspartate 247–alanine 258 has biased composition (basic and acidic residues). Serine 259 is subject to Phosphoserine; by AMPK, CaMK1, SIK1 and PKD/PRKD1. Residues lysine 272–leucine 281 show a composition bias toward basic and acidic residues. The residue at position 292 (threonine 292) is a Phosphothreonine; by PKC. 2 disordered regions span residues glycine 302–threonine 343 and methionine 481–serine 504. Residues asparagine 312 to serine 327 show a composition bias toward low complexity. Residues threonine 328 to asparagine 340 are compositionally biased toward polar residues. A compositionally biased stretch (low complexity) spans serine 494–serine 504. Serine 498 bears the Phosphoserine; by AMPK, CaMK1, SIK1 and PKD/PRKD1 mark. An N6-acetyllysine modification is found at lysine 533. The disordered stretch occupies residues threonine 536–glycine 625. A compositionally biased stretch (acidic residues) spans serine 581–glutamate 621. Residues serine 611 and serine 661 each carry the phosphoserine modification. The interval glycine 684–glutamine 1028 is histone deacetylase. Zn(2+) contacts are provided by cysteine 696, cysteine 698, histidine 704, and cysteine 781. Residue histidine 833 is part of the active site. The short motif at glutamate 1081 to leucine 1122 is the Nuclear export signal element. Residues glutamate 1097–leucine 1122 are disordered. The span at alanine 1104–glutamate 1113 shows a compositional bias: basic and acidic residues. Serine 1108 bears the Phosphoserine mark.

This sequence belongs to the histone deacetylase family. HD type 2 subfamily. In terms of assembly, interacts with AHRR, BAHD1, BCOR, HDAC7, HDAC9, CTBP1, MEF2C, NCOR2, NRIP1, PHB2 and a 14-3-3 chaperone protein. Interacts with BCL6, DDIT3/CHOP, GRK5, KDM5B and MYOCD. Interacts with EP300 in the presence of TFAP2C. Interacts with ANKRA2. Interacts with CUL7 (as part of the 3M complex); negatively regulated by ANKRA2. Interacts with ZBTB7B; the interaction allows the recruitment of HDAC4 on CD8 loci for deacetylation and possible inhibition of CD8 genes expression. Interacts with RARA. Phosphorylated by AMPK, CaMK1, SIK1 and PRKD1 at Ser-259 and Ser-498. The phosphorylation is required for the export to the cytoplasm and inhibition. Phosphorylated by the PKC kinases PKN1 and PKN2, impairing nuclear import. Phosphorylated by GRK5, leading to nuclear export of HDAC5 and allowing MEF2-mediated transcription. Post-translationally, ubiquitinated. Polyubiquitination however does not lead to its degradation.

The protein resides in the nucleus. Its subcellular location is the cytoplasm. The enzyme catalyses N(6)-acetyl-L-lysyl-[histone] + H2O = L-lysyl-[histone] + acetate. Functionally, responsible for the deacetylation of lysine residues on the N-terminal part of the core histones (H2A, H2B, H3 and H4). Histone deacetylation gives a tag for epigenetic repression and plays an important role in transcriptional regulation, cell cycle progression and developmental events. Histone deacetylases act via the formation of large multiprotein complexes. Involved in muscle maturation by repressing transcription of myocyte enhancer MEF2C. During muscle differentiation, it shuttles into the cytoplasm, allowing the expression of myocyte enhancer factors. Serves as a corepressor of RARA and causes its deacetylation. In association with RARA, plays a role in the repression of microRNA-10a and thereby in the inflammatory response. The chain is Histone deacetylase 5 (HDAC5) from Pongo abelii (Sumatran orangutan).